Here is a 365-residue protein sequence, read N- to C-terminus: Mitochondrial protein C2orf69 homolog (365 aa).

The N-terminal 24 residues, 1–24 (MLGSRRLRSPALVLLLLRPLLASG), are a transit peptide targeting the mitochondrion. The tract at residues 28 to 64 (SRLQTRAMNPGGGERGSPEDSHRLQRSTVPGSDPQRS) is disordered. A compositionally biased stretch (polar residues) spans 53–64 (RSTVPGSDPQRS).

It belongs to the C2orf69 family.

It localises to the mitochondrion matrix. Functionally, may play a role in the respiratory chain. This chain is Mitochondrial protein C2orf69 homolog, found in Mus musculus (Mouse).